The chain runs to 106 residues: Urease subunit beta (106 aa).

This sequence belongs to the urease beta subunit family. Heterotrimer of UreA (gamma), UreB (beta) and UreC (alpha) subunits. Three heterotrimers associate to form the active enzyme.

It is found in the cytoplasm. The enzyme catalyses urea + 2 H2O + H(+) = hydrogencarbonate + 2 NH4(+). It participates in nitrogen metabolism; urea degradation; CO(2) and NH(3) from urea (urease route): step 1/1. The protein is Urease subunit beta of Prochlorococcus marinus (strain MIT 9312).